The primary structure comprises 473 residues: Photosystem II CP43 reaction center protein (473 aa).

The propeptide occupies 1–14 (MKTLYSLRRFYHVE). N-acetylthreonine is present on Thr15. At Thr15 the chain carries Phosphothreonine. Helical transmembrane passes span 69–93 (LFEV…PHLA), 134–155 (LIGP…KDKN), 178–200 (KAVW…RKIT), 255–275 (KPFA…LSYS), and 291–312 (WFNN…ASQA). Residue Glu367 coordinates [CaMn4O5] cluster. A helical transmembrane segment spans residues 447 to 471 (RARAAAAGFEKGIDRETEPVFFMNP).

Belongs to the PsbB/PsbC family. PsbC subfamily. PSII is composed of 1 copy each of membrane proteins PsbA, PsbB, PsbC, PsbD, PsbE, PsbF, PsbH, PsbI, PsbJ, PsbK, PsbL, PsbM, PsbT, PsbX, PsbY, PsbZ, Psb30/Ycf12, at least 3 peripheral proteins of the oxygen-evolving complex and a large number of cofactors. It forms dimeric complexes. Binds multiple chlorophylls and provides some of the ligands for the Ca-4Mn-5O cluster of the oxygen-evolving complex. It may also provide a ligand for a Cl- that is required for oxygen evolution. PSII binds additional chlorophylls, carotenoids and specific lipids. serves as cofactor.

It is found in the plastid. It localises to the chloroplast thylakoid membrane. Functionally, one of the components of the core complex of photosystem II (PSII). It binds chlorophyll and helps catalyze the primary light-induced photochemical processes of PSII. PSII is a light-driven water:plastoquinone oxidoreductase, using light energy to abstract electrons from H(2)O, generating O(2) and a proton gradient subsequently used for ATP formation. In Staurastrum punctulatum (Green alga), this protein is Photosystem II CP43 reaction center protein.